Consider the following 225-residue polypeptide: Thymidylate kinase (225 aa).

An ATP-binding site is contributed by Gly-12–Ser-19.

Belongs to the thymidylate kinase family.

The catalysed reaction is dTMP + ATP = dTDP + ADP. In terms of biological role, phosphorylation of dTMP to form dTDP in both de novo and salvage pathways of dTTP synthesis. The sequence is that of Thymidylate kinase from Chelativorans sp. (strain BNC1).